Here is a 189-residue protein sequence, read N- to C-terminus: uncharacterized protein (189 aa).

The protein belongs to the isochorismatase family.

This is an uncharacterized protein from Bacillus subtilis (strain 168).